Consider the following 222-residue polypeptide: Cytidylate kinase (222 aa).

Position 12–20 (12–20 (GPSGAGKGT)) interacts with ATP.

This sequence belongs to the cytidylate kinase family. Type 1 subfamily.

The protein resides in the cytoplasm. It catalyses the reaction CMP + ATP = CDP + ADP. The enzyme catalyses dCMP + ATP = dCDP + ADP. This Methylococcus capsulatus (strain ATCC 33009 / NCIMB 11132 / Bath) protein is Cytidylate kinase.